The following is a 542-amino-acid chain: Cytochrome P450 monooxygenase TRI1 (542 aa).

The chain crosses the membrane as a helical span at residues 37 to 54 (LIYFLCFVVLGRAVQWFL). Residues asparagine 167, asparagine 297, and asparagine 428 are each glycosylated (N-linked (GlcNAc...) asparagine). A heme-binding site is contributed by cysteine 469.

This sequence belongs to the cytochrome P450 family. Heme is required as a cofactor.

It localises to the membrane. It participates in sesquiterpene biosynthesis; trichothecene biosynthesis. In terms of biological role, cytochrome P450 monooxygenase; part of 2-gene cluster involved in trichothecene C-8 modification that mediates the biosynthesis of T2-toxin. The biosynthesis of trichothecenes begins with the cyclization of farnesyl diphosphate to trichodiene and is catalyzed by the trichodiene synthase TRI5. Trichodiene undergoes a series of oxygenations catalyzed by the cytochrome P450 monooxygenase TRI4. TRI4 controls the addition of four oxygens at C-2, C-3, C-11, and the C-12, C-13-epoxide to form the intermediate isotrichotriol. Isotrichotriol then undergoes a non-enzymatic isomerization and cyclization to form isotrichodermol. During this process, the oxygen at the C-2 position becomes the pyran ring oxygen and the hydroxyl group at C-11 is lost. More complex type A trichothecenes are built by modifying isotrichodermol through a series of paired hydroxylation and acetylation or acylation steps. Isotrichodermol is converted to isotrichodermin by the acetyltransferase TRI101. TRI101 encodes a C-3 transacetylase that acts as a self-protection or resistance factor during biosynthesis and that the presence of a free C-3 hydroxyl group is a key component of Fusarium trichothecene phytotoxicity. A second hydroxyl group is added to C-15 by the trichothecene C-15 hydroxylase TRI11, producing 15-decalonectrin, which is then acetylated by TRI3, producing calonectrin. A third hydroxyl group is added at C-4 by the cytochrome P450 monooxygenase TRI13, converting calonectrin to 3,15-diacetoxyspirpenol, which is subsequently acetylated by the acetyltransferase TRI7. A fourth hydroxyl group is added to C-8 by the cytochrome P450 monooxygenase TRI1, followed by the addition of an isovaleryl moiety by TRI16. Finally, the acetyl group is removed from the C-3 position by the trichothecene C-3 esterase TRI8 to produce T-2 toxin. This chain is Cytochrome P450 monooxygenase TRI1, found in Fusarium sporotrichioides.